A 1849-amino-acid chain; its full sequence is Brefeldin A-inhibited guanine nucleotide-exchange protein 1 (1849 aa).

The DCB; DCB:DCB domain and DCB:HUS domain interaction stretch occupies residues 2 to 224 (YEGKKTKNMF…QEAKQMEKER (223 aa)). The span at 46–58 (AETEKQSPPHGEA) shows a compositional bias: basic and acidic residues. Disordered regions lie at residues 46-65 (AETE…SSTL), 216-248 (EAKQ…QLRY), 267-302 (LHTN…DQAT), and 378-413 (TPIS…SPGA). Serine 52 bears the Phosphoserine mark. Positions 267-277 (LHTNDVDKSLQ) are enriched in basic and acidic residues. A phosphoserine mark is found at serine 286, serine 289, serine 290, serine 397, and serine 410. Positions 394-409 (SVSSNDTQESGNSSGP) are enriched in polar residues. The tract at residues 557-577 (ADAQSVVDIYVNYDCDLNAAN) is HUS; DCB:HUS domain interaction. Residues 709-840 (FNKKPKRGIQ…IIMLTTDLHS (132 aa)) form the SEC7 domain. The Nuclear localization signal (NLS) signature appears at 711–715 (KKPKR). At serine 1079 the chain carries Phosphoserine. Residues 1543–1562 (RPNSGETAPPPPSPVSEKPL) form a disordered region. Phosphoserine occurs at positions 1566 and 1569.

Homodimer. Interacts with ARFGEF2/BIG2; both proteins are probably part of the same or very similar macromolecular complexes. Interacts with FKBP2. Interacts with MYO9B. Interacts with PRKAR1A and PRKAR2A. Interacts with PPP1CC. Interacts with NCL, FBL, NUP62 and U3 small nucleolar RNA. Interacts with DPY30. Interacts with PDE3A. Interacts with KANK1. Interacts with TBC1D22A and TBC1D22B. Interacts (via N-terminus) with ARL1. Post-translationally, phosphorylated. In vitro phosphorylated by PKA reducing its GEF activity and dephosphorylated by phosphatase PP1. Expressed in placenta, lung, heart, brain, kidney and pancreas.

The protein localises to the cytoplasm. Its subcellular location is the perinuclear region. It is found in the golgi apparatus. It localises to the trans-Golgi network membrane. The protein resides in the nucleus. The protein localises to the nucleolus. Its subcellular location is the nucleus matrix. Its activity is regulated as follows. Inhibited by brefeldin A. Its function is as follows. Promotes guanine-nucleotide exchange on ARF1 and ARF3. Promotes the activation of ARF1/ARF3 through replacement of GDP with GTP. Involved in vesicular trafficking. Required for the maintenance of Golgi structure; the function may be independent of its GEF activity. Required for the maturation of integrin beta-1 in the Golgi. Involved in the establishment and persistence of cell polarity during directed cell movement in wound healing. Proposed to act as A kinase-anchoring protein (AKAP) and may mediate crosstalk between Arf and PKA pathways. Inhibits GAP activity of MYO9B probably through competitive RhoA binding. The function in the nucleus remains to be determined. The chain is Brefeldin A-inhibited guanine nucleotide-exchange protein 1 (ARFGEF1) from Homo sapiens (Human).